The sequence spans 593 residues: MLPAHKQTLEALLADSVKQVAHALKGADAAFVAPAITLERPKVAAHGDVACNVAMQLAKPLGTNPRQLAEQIVAALTAQPAAQGLVEAAEIAGPGFINLRLSAAAKQAVIAAVFEQGRAFGTSDREKGKQVLLEFVSANPTGPLHVGHGRQAALGDVLANVIASQGYAVHREFYYNDAGVQIGNLAISTQARARGLKPGDAGWPEAAYNGEYIADIARDYLNGETVAASDGEPVKGTGDVEDLDAIRKFAVTYLRREQDMDLQAFGVKFDQYYLESSLYSEGRVEKTVDALVKAGMTYEQDGALWLRTTDEGDDKDRVMRKSDGTYTYFVPDVAYHVTKWERGFTKVINIQGSDHHGTIARVRAGLQGLHIGIPKGYPDYVLHKMVTVMRDGQEVKISKRAGSYVTVRDLIEWSGGAAAGQEAAPDLIDEATITRGRDAVRFFLISRKADTEFVFDIDLALKQNDENPVYYVQYAHARICSVLNELKSRYNVDVAQLPGADLSQLTSAQAASLMQKLAEYPDMLTHAANELAPHAVAFYLRDLAGEFHSFYNAERVLVDDEAPRNARAALLAATRQVLENGLAVLGVSAPAKM.

The 'HIGH' region motif lies at 138-148; that stretch reads ANPTGPLHVGH.

Belongs to the class-I aminoacyl-tRNA synthetase family. As to quaternary structure, monomer.

The protein resides in the cytoplasm. The enzyme catalyses tRNA(Arg) + L-arginine + ATP = L-arginyl-tRNA(Arg) + AMP + diphosphate. This is Arginine--tRNA ligase from Burkholderia orbicola (strain MC0-3).